The primary structure comprises 497 residues: MTGTSNIPTHGKEHKDAPALLPLPAPNPHHTHAAHPGNPSHDRPPSRGKLFIKTHGCQMNEYDSAKMADVLTTTEALELTDNPEEADIILINTCSIREKAQEKVFSQLGRWRALKTSGRDVIIGVGGCVASQEGEAIVKRAPYVDLVFGPQTLHRLPDMIRARREQNRPQVDIRFPEIEKFDHLPTPRAEGPSAFVSIMEGCSKYCSFCVVPYTRGEEVSRPFEDVLTEIAHLATQGVREINLLGQNVNAYRGAMDPGPSNNTNPAPPPYADLGLLIRAIAQFESIGRIRFTTSHPLEFSDSLVEAYRDVPQLANHLHLPVQSGSDRILSAMKRGYTALEFKSKIRKLRAVRPDISISSDFIIGFPGESDTDFQKTMQLIEDIGFDQSFSFIYSRRPGTPASNLEDHTPDEIKRTRLEHLQKHINTYAADISKRMIGTVQTVLVEGPSKKNPNELTGKTENMRPVNFPGHPRLIGQFIDVHITEALSNSLRGRVHTN.

The disordered stretch occupies residues 1–50 (MTGTSNIPTHGKEHKDAPALLPLPAPNPHHTHAAHPGNPSHDRPPSRGKL). In terms of domain architecture, MTTase N-terminal spans 48–165 (GKLFIKTHGC…LPDMIRARRE (118 aa)). Cysteine 57, cysteine 94, cysteine 128, cysteine 202, cysteine 206, and cysteine 209 together coordinate [4Fe-4S] cluster. The Radical SAM core domain occupies 188–430 (RAEGPSAFVS…QKHINTYAAD (243 aa)). The region spanning 433–496 (KRMIGTVQTV…SNSLRGRVHT (64 aa)) is the TRAM domain.

The protein belongs to the methylthiotransferase family. MiaB subfamily. In terms of assembly, monomer. [4Fe-4S] cluster is required as a cofactor.

It localises to the cytoplasm. It catalyses the reaction N(6)-dimethylallyladenosine(37) in tRNA + (sulfur carrier)-SH + AH2 + 2 S-adenosyl-L-methionine = 2-methylsulfanyl-N(6)-dimethylallyladenosine(37) in tRNA + (sulfur carrier)-H + 5'-deoxyadenosine + L-methionine + A + S-adenosyl-L-homocysteine + 2 H(+). Functionally, catalyzes the methylthiolation of N6-(dimethylallyl)adenosine (i(6)A), leading to the formation of 2-methylthio-N6-(dimethylallyl)adenosine (ms(2)i(6)A) at position 37 in tRNAs that read codons beginning with uridine. The sequence is that of tRNA-2-methylthio-N(6)-dimethylallyladenosine synthase from Xylella fastidiosa (strain 9a5c).